The primary structure comprises 1139 residues: Protein kinase C-like (1139 aa).

Residues 1–67 (MNEDEAIQNI…LRDIQLRKVG (67 aa)) enclose the REM-1 1 domain. Positions 72-132 (GMSLGADDAG…PGPGAASKAR (61 aa)) are disordered. The region spanning 142-219 (KYDTPYLGPR…LKRYEELHVD (78 aa)) is the REM-1 2 domain. The 119-residue stretch at 225 to 343 (AQDDDSINTP…MRRKRIEAEM (119 aa)) folds into the C2 domain. The disordered stretch occupies residues 349 to 404 (VSADRMGSTGAPSQFPMSPTSGSFGGSPQAPGGGQGQAPGPFGDPAPQPQVVTGPI). A compositionally biased stretch (polar residues) spans 358 to 368 (GAPSQFPMSPT). 2 Phorbol-ester/DAG-type zinc fingers span residues 454–502 (GHKF…VTKC) and 522–572 (PHRF…PDFC). 3 disordered regions span residues 590–637 (KQRQ…TPSA), 649–668 (QTSPQRPGQPGRAPSDLSAA), and 679–804 (QGRT…TDPG). The span at 594 to 614 (QKTTSLSEKTLRSGATKSPTT) shows a compositional bias: polar residues. Low complexity predominate over residues 615 to 629 (AGHGSSASFSSAGAG). Pro residues-rich tracts occupy residues 723 to 734 (AQPPAQQRPPQP) and 743 to 760 (AQMPPQQPPPQQPLPPQP). A compositionally biased stretch (low complexity) spans 761–793 (GQQYQQQQPAAQKPQPQPPATAQGAAAGPPGSQ). The 260-residue stretch at 814–1073 (FNFLAVLGKG…AQEVMSQPFF (260 aa)) folds into the Protein kinase domain. ATP-binding positions include 820–828 (LGKGNFGKV) and K843. D939 (proton acceptor) is an active-site residue. Residues 1074 to 1139 (RNINWDDIYH…RGFSYTADLD (66 aa)) form the AGC-kinase C-terminal domain.

The protein belongs to the protein kinase superfamily. AGC Ser/Thr protein kinase family. PKC subfamily.

The catalysed reaction is L-seryl-[protein] + ATP = O-phospho-L-seryl-[protein] + ADP + H(+). It catalyses the reaction L-threonyl-[protein] + ATP = O-phospho-L-threonyl-[protein] + ADP + H(+). With respect to regulation, stimulated about twofold by phospholipids or phorbol esters. The sequence is that of Protein kinase C-like (pkc1) from Hypocrea jecorina (Trichoderma reesei).